A 426-amino-acid polypeptide reads, in one-letter code: MTKFETVRGMKDYIGIDAEKIRYLESTFRDLAIKYGYSEIITPVVEEFKLFALKGGEELRETMYVFKDKADRELSLRPEITPSVARAYIQNLQSSPKPIRLFYFGTVYRYDEPQYGRYREFRQAGIEMIGDSSILADLEVLDLLYNFYDKLNLSNDITIKINNIGIFRKIMDKYNIEDNLQEHILHLIDKNKINEALDILEKNLKNKDIIDFFNKILTKKDTKLEDIESLAELEEVSRLDIKSEFLYLFRLSRILSNLNIKFKIDLGFVRGLAYYTGLIFEVLHPSVQFSIAGGGRYDKLIELYGGLPSPAIGFAIGVERTLLVIKDLKVEEPVNVIVIGMSEDTIPSMFMVSRILRKEEYKVVINTKDQPLSKLLPYYASQGFKVAIIIGKQELEKNMITVRNLITRKQISVPLENIEDAIKQTL.

The protein belongs to the class-II aminoacyl-tRNA synthetase family.

It localises to the cytoplasm. It carries out the reaction tRNA(His) + L-histidine + ATP = L-histidyl-tRNA(His) + AMP + diphosphate + H(+). This chain is Histidine--tRNA ligase, found in Saccharolobus islandicus (strain L.S.2.15 / Lassen #1) (Sulfolobus islandicus).